We begin with the raw amino-acid sequence, 445 residues long: MPVGRSLSLDPNLLAQLQSHSPTLWLNPHQGMPLPDFAPTAADLADADARLRRCAGLLAELFAELRPSGGLIASPLQPAEPLKRAARAGHAQAGAWYVKRDDVLPVAGSIKARGGFHEVLALAESIAERHGLAGADTDRRALASGAARARFARHTVMVGSTGNLGLSIGMLASALGFRTVVHMSADAKAWKKARLRTRGVEVVEHAGDYAKAVDAGRRQAAGMPCCHFVDDEGSRMLFLGYATAAAELAAQLAQAGRPVDARHPLFVHLPCGVGGAPGGIVYGLKALYGEHVHAFVAEPTASPCVLVQLAGDAAHPRSVYDIGLDNRTEADGLAVAQASPLAAALLRAQAAGAFTVDDRQLFAHLLDARERLGIDLEPSAAAAFGGPAWIAGSDAGRAYLRGRGIDPDAATHVIWATGGSLVPAQEHRRFQAHARAQRQVGGAGA.

Lysine 111 carries the N6-(pyridoxal phosphate)lysine modification.

The protein belongs to the serine/threonine dehydratase family. DsdA subfamily. Pyridoxal 5'-phosphate serves as cofactor.

The catalysed reaction is D-serine = pyruvate + NH4(+). The chain is Probable D-serine dehydratase from Burkholderia pseudomallei (strain 1106a).